The sequence spans 530 residues: MTALNDTERAVRNWTAGRPHRPAPMRPPRSEETASERPSRYYPTWLPSRSFIAAVIAIGGMQLLATMDSTVAIVALPKIQNELSLSDAGRSWVITAYVLTFGGLMLLGGRLGDTIGRKRTFIVGVALFTISSVLCAVAWDEATLVIARLSQGVGSAIASPTGLALVATTFPKGPARNAATAVFAAMTAIGSVMGLVVGGALTEVSWRWAFLVNVPIGLVMIYLARTALRETNKERMKLDATGAILATLACTAAVFAFSIGPEKGWMSGITIGSGLVALAAAVAFVIVERTAENPVVPFHLFRDRNRLVTFSAILLAGGVMFSLTVCIGLYVQDILGYSALRAGVGFIPFVIAMGIGLGVSSQLVSRFSPRVLTIGGGYLLFGAMLYGSFFMHRGVPYFPNLVMPIVVGGIGIGMAVVPLTLSAIAGVGFDQIGPVSAIALMLQSLGGPLVLAVIQAVITSRTLYLGGTTGPVKFMNDVQLAALDHAYTYGLLWVAGAAIIVGGMALFIGYTPQQVAHAQEVKEAIDAGEL.

Basic and acidic residues-rich tracts occupy residues 1–11 and 28–38; these read MTALNDTERAV and PRSEETASERP. Residues 1 to 38 are disordered; the sequence is MTALNDTERAVRNWTAGRPHRPAPMRPPRSEETASERP. Residues 1–50 lie on the Cytoplasmic side of the membrane; it reads MTALNDTERAVRNWTAGRPHRPAPMRPPRSEETASERPSRYYPTWLPSRS. The helical transmembrane segment at 51–71 threads the bilayer; it reads FIAAVIAIGGMQLLATMDSTV. The Extracellular segment spans residues 72–91; sequence AIVALPKIQNELSLSDAGRS. A helical transmembrane segment spans residues 92-112; sequence WVITAYVLTFGGLMLLGGRLG. Residues 113–119 are Cytoplasmic-facing; the sequence is DTIGRKR. The helical transmembrane segment at 120–140 threads the bilayer; the sequence is TFIVGVALFTISSVLCAVAWD. The Extracellular segment spans residues 141–150; that stretch reads EATLVIARLS. A helical membrane pass occupies residues 151–171; that stretch reads QGVGSAIASPTGLALVATTFP. At 172-180 the chain is on the cytoplasmic side; sequence KGPARNAAT. The helical transmembrane segment at 181 to 201 threads the bilayer; it reads AVFAAMTAIGSVMGLVVGGAL. Topologically, residues 202–203 are extracellular; sequence TE. A helical transmembrane segment spans residues 204–224; sequence VSWRWAFLVNVPIGLVMIYLA. Residues 225-239 are Cytoplasmic-facing; it reads RTALRETNKERMKLD. The chain crosses the membrane as a helical span at residues 240–260; the sequence is ATGAILATLACTAAVFAFSIG. Over 261–266 the chain is Extracellular; sequence PEKGWM. A helical membrane pass occupies residues 267 to 287; that stretch reads SGITIGSGLVALAAAVAFVIV. Topologically, residues 288-306 are cytoplasmic; the sequence is ERTAENPVVPFHLFRDRNR. A helical transmembrane segment spans residues 307 to 327; the sequence is LVTFSAILLAGGVMFSLTVCI. Over 328-343 the chain is Extracellular; the sequence is GLYVQDILGYSALRAG. The helical transmembrane segment at 344–364 threads the bilayer; sequence VGFIPFVIAMGIGLGVSSQLV. The Cytoplasmic segment spans residues 365–370; it reads SRFSPR. Residues 371-391 form a helical membrane-spanning segment; the sequence is VLTIGGGYLLFGAMLYGSFFM. The Extracellular segment spans residues 392–400; it reads HRGVPYFPN. The chain crosses the membrane as a helical span at residues 401–421; that stretch reads LVMPIVVGGIGIGMAVVPLTL. Residues 422–437 lie on the Cytoplasmic side of the membrane; it reads SAIAGVGFDQIGPVSA. The helical transmembrane segment at 438-458 threads the bilayer; it reads IALMLQSLGGPLVLAVIQAVI. The Extracellular portion of the chain corresponds to 459–488; the sequence is TSRTLYLGGTTGPVKFMNDVQLAALDHAYT. Residues 489-509 form a helical membrane-spanning segment; it reads YGLLWVAGAAIIVGGMALFIG. Residues 510–530 lie on the Cytoplasmic side of the membrane; sequence YTPQQVAHAQEVKEAIDAGEL.

Belongs to the major facilitator superfamily.

The protein resides in the cell membrane. This is an uncharacterized protein from Mycobacterium tuberculosis (strain CDC 1551 / Oshkosh).